Here is a 210-residue protein sequence, read N- to C-terminus: Translation initiation factor IF-3 (210 aa).

Positions alanine 169 to valine 210 are disordered. A compositionally biased stretch (basic and acidic residues) spans proline 176–glutamate 186. Positions lysine 187–valine 210 are enriched in low complexity.

This sequence belongs to the IF-3 family. In terms of assembly, monomer.

Its subcellular location is the cytoplasm. In terms of biological role, IF-3 binds to the 30S ribosomal subunit and shifts the equilibrium between 70S ribosomes and their 50S and 30S subunits in favor of the free subunits, thus enhancing the availability of 30S subunits on which protein synthesis initiation begins. This is Translation initiation factor IF-3 from Deinococcus deserti (strain DSM 17065 / CIP 109153 / LMG 22923 / VCD115).